The chain runs to 201 residues: Peptide deformylase (201 aa).

2 residues coordinate Fe cation: cysteine 121 and histidine 163. The active site involves glutamate 164. Histidine 167 provides a ligand contact to Fe cation.

The protein belongs to the polypeptide deformylase family. Fe(2+) is required as a cofactor.

The enzyme catalyses N-terminal N-formyl-L-methionyl-[peptide] + H2O = N-terminal L-methionyl-[peptide] + formate. Its function is as follows. Removes the formyl group from the N-terminal Met of newly synthesized proteins. Requires at least a dipeptide for an efficient rate of reaction. N-terminal L-methionine is a prerequisite for activity but the enzyme has broad specificity at other positions. In Synechococcus sp. (strain CC9902), this protein is Peptide deformylase.